The primary structure comprises 31 residues: Cytochrome b6-f complex subunit 6 (31 aa).

The chain crosses the membrane as a helical span at residues 4–24; it reads ITSYFGFLLAALTITSALFIG.

Belongs to the PetL family. The 4 large subunits of the cytochrome b6-f complex are cytochrome b6, subunit IV (17 kDa polypeptide, PetD), cytochrome f and the Rieske protein, while the 4 small subunits are PetG, PetL, PetM and PetN. The complex functions as a dimer.

The protein resides in the plastid. It localises to the chloroplast thylakoid membrane. In terms of biological role, component of the cytochrome b6-f complex, which mediates electron transfer between photosystem II (PSII) and photosystem I (PSI), cyclic electron flow around PSI, and state transitions. PetL is important for photoautotrophic growth as well as for electron transfer efficiency and stability of the cytochrome b6-f complex. This chain is Cytochrome b6-f complex subunit 6, found in Hamamelis virginiana (Witch-hazel).